Here is a 306-residue protein sequence, read N- to C-terminus: Putative beta-lactamase HcpD (306 aa).

The N-terminal stretch at 1 to 25 (MIKSWTKKWFLILFLMASCSSYLVA) is a signal peptide. TPR repeat units follow at residues 28 to 61 (GEKY…RVGV), 96 to 133 (HLAC…KGGV), 168 to 205 (GISC…KDGA), and 240 to 277 (GSGC…GFSG). Cystine bridges form between C55/C63, C91/C99, C127/C135, C163/C171, C199/C207, C235/C243, and C271/C279.

It belongs to the hcp beta-lactamase family.

Its subcellular location is the secreted. It carries out the reaction a beta-lactam + H2O = a substituted beta-amino acid. Functionally, may hydrolyze 6-aminopenicillinic acid and 7-aminocephalosporanic acid (ACA) derivatives. Binds to penicillin. In Helicobacter pylori (strain ATCC 700392 / 26695) (Campylobacter pylori), this protein is Putative beta-lactamase HcpD (hcpD).